We begin with the raw amino-acid sequence, 468 residues long: Mitochondrial adenyl nucleotide antiporter SLC25A23 (468 aa).

Residues 1 to 149 (MRGSPGDAER…DHFLLHSLEN (149 aa)) form a regulatory N-terminal domain region. At 1–188 (MRGSPGDAER…EKLTGMWWKQ (188 aa)) the chain is on the mitochondrial intermembrane side. The EF-hand 1 domain occupies 9–44 (ERRQRWGRLFEELDSNKDGRVDVHELRQGLARLGGG). Ca(2+)-binding residues include aspartate 22, asparagine 24, aspartate 26, arginine 28, and glutamate 33. A disordered region spans residues 34 to 67 (LRQGLARLGGGNPDPGAQQGISSEGDADPDGGLD). A compositionally biased stretch (acidic residues) spans 58–67 (GDADPDGGLD). EF-hand domains follow at residues 77-112 (EREQRLLLMFHSLDRNQDGHIDVSEIQQSFRALGIS) and 113-148 (ISLEQAEKILHSMDRDGTMTIDWQEWRDHFLLHSLE). Ca(2+)-binding residues include aspartate 90, asparagine 92, aspartate 94, histidine 96, and glutamate 101. A linker region region spans residues 150–159 (VEDVLYFWKH). The tract at residues 165–468 (IGECLTVPDE…MKQALGVTSR (304 aa)) is C-terminal transmembrane transporter domain. 3 Solcar repeats span residues 183–269 (GMWW…IKRA), 277–362 (LHVQ…LKNW), and 374–462 (PGIL…MKQA). The chain crosses the membrane as a helical span at residues 189–206 (LVAGAVAGAVSRTGTAPL). Topologically, residues 207-243 (DRLKVFMQVHASKTNRLNILGGLRSMVLEGGIRSLWR) are mitochondrial matrix. The helical transmembrane segment at 244–263 (GNGINVLKIAPESAIKFMAY) threads the bilayer. At 264–286 (EQIKRAILGQQETLHVQERFVAG) the chain is on the mitochondrial intermembrane side. A helical membrane pass occupies residues 287–300 (SLAGATAQTIIYPM). Residues 301-336 (EVLKTRLTLRRTGQYKGLLDCARRILEREGPRAFYR) lie on the Mitochondrial matrix side of the membrane. A helical transmembrane segment spans residues 337-356 (GYLPNVLGIIPYAGIDLAVY). Residues 357 to 379 (ETLKNWWLQQYSHDSADPGILVL) lie on the Mitochondrial intermembrane side of the membrane. A helical transmembrane segment spans residues 380 to 397 (LACGTISSTCGQIASYPL). At 398 to 436 (ALVRTRMQAQASIEGGPQLSMLGLLRHILSQEGMRGLYR) the chain is on the mitochondrial matrix side. The chain crosses the membrane as a helical span at residues 437–456 (GIAPNFMKVIPAVSISYVVY). Topologically, residues 457 to 468 (ENMKQALGVTSR) are mitochondrial intermembrane.

The protein belongs to the mitochondrial carrier (TC 2.A.29) family. In terms of assembly, interacts with MCU. Interacts with MICU1. As to expression, expressed at low levels in most tissues examined, with highest expression in brain, skeletal muscle and pancreas.

The protein resides in the mitochondrion inner membrane. It catalyses the reaction Mg(2+)(out) + phosphate(in) + ATP(out) = Mg(2+)(in) + phosphate(out) + ATP(in). The catalysed reaction is ADP(out) + phosphate(in) + H(+)(out) = ADP(in) + phosphate(out) + H(+)(in). The enzyme catalyses AMP(out) + phosphate(in) = AMP(in) + phosphate(out). It carries out the reaction phosphate(in) + ATP(out) + 2 H(+)(out) = phosphate(out) + ATP(in) + 2 H(+)(in). It catalyses the reaction dADP(in) + ADP(out) = dADP(out) + ADP(in). The catalysed reaction is Mg(2+)(in) + ADP(out) + ATP(in) + H(+)(out) = Mg(2+)(out) + ADP(in) + ATP(out) + H(+)(in). The enzyme catalyses ADP(out) + diphosphate(in) = ADP(in) + diphosphate(out). It carries out the reaction dAMP(in) + ADP(out) + H(+)(out) = dAMP(out) + ADP(in) + H(+)(in). It catalyses the reaction 3'-AMP(in) + ADP(out) + H(+)(out) = 3'-AMP(out) + ADP(in) + H(+)(in). The catalysed reaction is dAMP(out) + phosphate(in) = dAMP(in) + phosphate(out). The enzyme catalyses 3'-AMP(out) + phosphate(in) = 3'-AMP(in) + phosphate(out). It carries out the reaction dADP(out) + phosphate(in) + H(+)(out) = dADP(in) + phosphate(out) + H(+)(in). With respect to regulation, activated by an increase in cytosolic calcium levels that induce a conformational change of the N-terminal regulatory domain, uncapping the channel and allowing transport. Inhibited by bathophenanthroline, mersalyl, p-hydroxymercuribenzoate, bromcresol purple, tannic acid, pyridoxal 5'-phosphate and p-hydroxymercuribenzoate. Electroneutral antiporter that mediates the transport of adenine nucleotides through the inner mitochondrial membrane. Originally identified as an ATP-magnesium/inorganic phosphate antiporter, it also acts as a broad specificity adenyl nucleotide antiporter. By regulating the mitochondrial matrix adenine nucleotide pool could adapt to changing cellular energetic demands and indirectly regulate adenine nucleotide-dependent metabolic pathways. Also acts as a regulator of mitochondrial calcium uptake and can probably transport trace amounts of other divalent metal cations in complex with ATP. In vitro, a low activity is also observed with guanyl and pyrimidine nucleotides. This chain is Mitochondrial adenyl nucleotide antiporter SLC25A23, found in Homo sapiens (Human).